A 260-amino-acid polypeptide reads, in one-letter code: Glutamate racemase (260 aa).

Residues 14 to 15 (DS) and 46 to 47 (YG) contribute to the substrate site. Residue Cys77 is the Proton donor/acceptor of the active site. Position 78–79 (78–79 (NT)) interacts with substrate. Cys188 serves as the catalytic Proton donor/acceptor. 189 to 190 (TH) contributes to the substrate binding site.

Belongs to the aspartate/glutamate racemases family.

It carries out the reaction L-glutamate = D-glutamate. It functions in the pathway cell wall biogenesis; peptidoglycan biosynthesis. Provides the (R)-glutamate required for cell wall biosynthesis. This is Glutamate racemase from Clostridium perfringens (strain 13 / Type A).